Here is a 273-residue protein sequence, read N- to C-terminus: Soluble P-type ATPase-like phosphatase (273 aa).

The active-site 4-aspartylphosphate intermediate is Asp8.

This sequence belongs to the cation transport ATPase (P-type) (TC 3.A.3) family. Type IB subfamily. The cofactor is Mg(2+).

Its activity is regulated as follows. Inhibited by orthovanadate. Its function is as follows. Most probably acts as a phosphatase in the cytosol. This Methanocaldococcus jannaschii (strain ATCC 43067 / DSM 2661 / JAL-1 / JCM 10045 / NBRC 100440) (Methanococcus jannaschii) protein is Soluble P-type ATPase-like phosphatase (patS).